The sequence spans 510 residues: GMP synthase [glutamine-hydrolyzing] (510 aa).

Positions 5–195 (LVLVVDFGGQ…LFNVCNLKGD (191 aa)) constitute a Glutamine amidotransferase type-1 domain. The active-site Nucleophile is the C82. Residues H169 and E171 contribute to the active site. Residues 196–385 (WSMSSFAEQQ…LGIPHKLVWR (190 aa)) form the GMPS ATP-PPase domain. 223–229 (SGGVDSS) is an ATP binding site.

As to quaternary structure, homodimer.

The catalysed reaction is XMP + L-glutamine + ATP + H2O = GMP + L-glutamate + AMP + diphosphate + 2 H(+). It participates in purine metabolism; GMP biosynthesis; GMP from XMP (L-Gln route): step 1/1. Functionally, catalyzes the synthesis of GMP from XMP. This chain is GMP synthase [glutamine-hydrolyzing], found in Clostridium botulinum (strain Kyoto / Type A2).